Consider the following 486-residue polypeptide: Cardiolipin synthase A (486 aa).

2 consecutive transmembrane segments (helical) span residues Thr-3–Val-23 and Met-38–Phe-58. PLD phosphodiesterase domains lie at Met-219–Arg-246 and Glu-399–Ser-426. Residues His-224, Lys-226, Asp-231, His-404, Lys-406, and Asp-411 contribute to the active site.

The protein belongs to the phospholipase D family. Cardiolipin synthase subfamily. ClsA sub-subfamily.

The protein localises to the cell inner membrane. It catalyses the reaction 2 a 1,2-diacyl-sn-glycero-3-phospho-(1'-sn-glycerol) = a cardiolipin + glycerol. Functionally, catalyzes the reversible phosphatidyl group transfer from one phosphatidylglycerol molecule to another to form cardiolipin (CL) (diphosphatidylglycerol) and glycerol. The chain is Cardiolipin synthase A from Yersinia pseudotuberculosis serotype O:3 (strain YPIII).